We begin with the raw amino-acid sequence, 409 residues long: Phospho-N-acetylmuramoyl-pentapeptide-transferase (409 aa).

Helical transmembrane passes span 23-43, 73-93, 95-115, 132-152, 214-234, 247-267, 279-299, 305-325, 331-351, and 386-406; these read YITF…TIFG, TPTM…LLLA, LNNI…AIGF, GIFK…TLYF, YAWL…SNGA, TSAI…NVIF, SGEM…FLWY, AVFM…VLAI, MLIP…VLQV, and KIVT…IVTL.

Belongs to the glycosyltransferase 4 family. MraY subfamily. It depends on Mg(2+) as a cofactor.

The protein resides in the cell inner membrane. The catalysed reaction is UDP-N-acetyl-alpha-D-muramoyl-L-alanyl-gamma-D-glutamyl-meso-2,6-diaminopimeloyl-D-alanyl-D-alanine + di-trans,octa-cis-undecaprenyl phosphate = di-trans,octa-cis-undecaprenyl diphospho-N-acetyl-alpha-D-muramoyl-L-alanyl-D-glutamyl-meso-2,6-diaminopimeloyl-D-alanyl-D-alanine + UMP. The protein operates within cell wall biogenesis; peptidoglycan biosynthesis. Its function is as follows. Catalyzes the initial step of the lipid cycle reactions in the biosynthesis of the cell wall peptidoglycan: transfers peptidoglycan precursor phospho-MurNAc-pentapeptide from UDP-MurNAc-pentapeptide onto the lipid carrier undecaprenyl phosphate, yielding undecaprenyl-pyrophosphoryl-MurNAc-pentapeptide, known as lipid I. The chain is Phospho-N-acetylmuramoyl-pentapeptide-transferase from Flavobacterium psychrophilum (strain ATCC 49511 / DSM 21280 / CIP 103535 / JIP02/86).